The sequence spans 342 residues: Fructose-1,6-bisphosphatase class 1 (342 aa).

E97, D119, L121, and D122 together coordinate Mg(2+). Substrate is bound by residues 122 to 125 (DGSS), N215, Y247, and K280. A Mg(2+)-binding site is contributed by E286.

Belongs to the FBPase class 1 family. Homotetramer. Mg(2+) serves as cofactor.

The protein resides in the cytoplasm. It carries out the reaction beta-D-fructose 1,6-bisphosphate + H2O = beta-D-fructose 6-phosphate + phosphate. Its pathway is carbohydrate biosynthesis; gluconeogenesis. This is Fructose-1,6-bisphosphatase class 1 from Leptospira interrogans serogroup Icterohaemorrhagiae serovar copenhageni (strain Fiocruz L1-130).